The sequence spans 471 residues: Tetratricopeptide repeat protein 29 (471 aa).

7 TPR repeats span residues 92–131, 136–173, 182–215, 234–267, 274–307, 314–347, and 354–387; these read DKLPEAAKAQSLFWQQRPLEDQPDKLDNFYHYLTRAEAAE, YEEVYNNLYALACYFDNSEDKWVRNHFYERCFNIAQLI, AEAESHMGLLFEEEGELLKAAEHYEAFHELTHGR, VRTYRLLSDRMLENKDYKQAIKILIKASEIAREG, GEASYYLGLAHLASGEYETALTVLNRYSEISTSL, GRAYEAIAKALQSQGETTEAINYLEKFVTIARNN, and IRACTMLGDIYNEKGQYSKASEYFQQAFSTAMEL. Residues 449 to 471 are disordered; it reads ATEDNIYQLPDAEEETRRSPENQ.

As to expression, expressed in spermatozoa (at protein level).

The protein resides in the cytoplasm. Its subcellular location is the cytoskeleton. It is found in the flagellum axoneme. Functionally, axonemal protein which is implicated in axonemal and/or peri-axonemal structure assembly and regulates flagellum assembly and beating and therefore sperm motility. The chain is Tetratricopeptide repeat protein 29 (Ttc29) from Mus musculus (Mouse).